Reading from the N-terminus, the 110-residue chain is Insulin (110 aa).

The first 24 residues, Met-1 to Ala-24, serve as a signal peptide directing secretion. 3 cysteine pairs are disulfide-bonded: Cys-31–Cys-96, Cys-43–Cys-109, and Cys-95–Cys-100. Positions Glu-57–Gln-87 are cleaved as a propeptide — c peptide. Positions Asp-60 to Ser-80 are disordered.

Belongs to the insulin family. Heterodimer of a B chain and an A chain linked by two disulfide bonds.

Its subcellular location is the secreted. In terms of biological role, insulin decreases blood glucose concentration. It increases cell permeability to monosaccharides, amino acids and fatty acids. It accelerates glycolysis, the pentose phosphate cycle, and glycogen synthesis in liver. The polypeptide is Insulin (INS) (Felis catus (Cat)).